The primary structure comprises 473 residues: Phosphatidylserine synthase 1 (473 aa).

Ala-2 is subject to N-acetylalanine. At 2 to 35 (ASCVGSRTLSKDDVNYRMHFRMINEQQVEDITID) the chain is on the cytoplasmic side. Residues 36–56 (FFYRPHTITLLSFTIISLMYF) form a helical membrane-spanning segment. Topologically, residues 57–72 (AFTRDDSVPEDNIWRG) are lumenal. A helical membrane pass occupies residues 73–93 (ILSVIFFFLIISVLAFPNGPF). The Cytoplasmic segment spans residues 94–102 (TRPHPALWR). A helical transmembrane segment spans residues 103–123 (MVFGLSVLYFLFLVFLLFLNF). Residues 124 to 186 (EQVKSLMYWL…AMKALLIRSY (63 aa)) are Lumenal-facing. Residues 187–207 (GLCWTISITWELTELFFMHLL) traverse the membrane as a helical segment. At 208–216 (PNFAECWWD) the chain is on the cytoplasmic side. A helical transmembrane segment spans residues 217–237 (QVILDILLCNGGGIWLGMVVC). The Lumenal segment spans residues 238 to 286 (RFLEMRTYHWASFKDIHTTTGKIKRAVLQFTPASWTYVRWFDPKSSFQR). Residues 287–307 (VAGIYLFMIIWQLTELNTFFL) traverse the membrane as a helical segment. Topologically, residues 308 to 319 (KHIFVFQASHPL) are cytoplasmic. A helical membrane pass occupies residues 320–342 (SWGRILFIGCITAPTVRQYYAYL). At 343-355 (TDTQCKRVGTQCW) the chain is on the lumenal side. Residues 356 to 376 (VFGVIGFLEAIVCIKFGQDLF) form a helical membrane-spanning segment. Over 377–383 (SKTQILY) the chain is Cytoplasmic. Residues 384–404 (VMLWLLCVAFTTFLCLYGMVW) traverse the membrane as a helical segment. At 405-473 (YAEHYGHREK…SKVTNGVGKK (69 aa)) the chain is on the lumenal side. A phosphoserine mark is found at Ser-417, Ser-425, Ser-442, and Ser-454. A disordered region spans residues 428 to 473 (ISWHHGKGSKGSEDSPPKHSSNHESHSSRRRNRHSKSKVTNGVGKK). Residues 437–454 (KGSEDSPPKHSSNHESHS) show a composition bias toward basic and acidic residues. Residues 455–464 (SRRRNRHSKS) are compositionally biased toward basic residues.

It belongs to the phosphatidyl serine synthase family. In terms of tissue distribution, expressed in kidney, testis, lung, skeletal muscle, liver brain, heart and spleen with highest expression in testis, liver, heart and brain.

The protein resides in the endoplasmic reticulum membrane. The catalysed reaction is a 1,2-diacyl-sn-glycero-3-phosphoethanolamine + L-serine = a 1,2-diacyl-sn-glycero-3-phospho-L-serine + ethanolamine. It catalyses the reaction a 1,2-diacyl-sn-glycero-3-phosphocholine + L-serine = a 1,2-diacyl-sn-glycero-3-phospho-L-serine + choline. Its pathway is phospholipid metabolism; phosphatidylserine biosynthesis. Its activity is regulated as follows. Potently inhibited by choline in the mitochondria-associated membrane (MAM). Very little inhibition by choline in the endoplasmic reticulum (ER) per se. Functionally, catalyzes a base-exchange reaction in which the polar head group of phosphatidylethanolamine (PE) or phosphatidylcholine (PC) is replaced by L-serine. Catalyzes mainly the conversion of phosphatidylcholine. Also converts, in vitro and to a lesser extent, phosphatidylethanolamine. This chain is Phosphatidylserine synthase 1 (Ptdss1), found in Mus musculus (Mouse).